A 151-amino-acid chain; its full sequence is Ubiquitin-conjugating enzyme E2 N (151 aa).

The UBC core domain maps to 3–149 (SLPRRIIKET…AREWTQKYAV (147 aa)). Cys-87 serves as the catalytic Glycyl thioester intermediate.

The protein belongs to the ubiquitin-conjugating enzyme family.

It carries out the reaction S-ubiquitinyl-[E1 ubiquitin-activating enzyme]-L-cysteine + [E2 ubiquitin-conjugating enzyme]-L-cysteine = [E1 ubiquitin-activating enzyme]-L-cysteine + S-ubiquitinyl-[E2 ubiquitin-conjugating enzyme]-L-cysteine.. Its pathway is protein modification; protein ubiquitination. In terms of biological role, catalyzes the covalent attachment of ubiquitin to other proteins. The chain is Ubiquitin-conjugating enzyme E2 N (ben) from Drosophila melanogaster (Fruit fly).